The following is a 164-amino-acid chain: Vesiculogenesis and immune response regulator (164 aa).

Post-translationally, could be O-mannosylated. Is likely mannosylated on Thr-61 when overexpressed in M.smegmatis.

It is found in the cell inner membrane. Its subcellular location is the cytoplasm. Functionally, virulence factor that regulates vesiculogenesis. Acts by regulating the production of mycobacterial membrane vesicles (MV) bearing Toll-like receptor 2 (TLR2) ligands, including the lipoproteins LpqH, a major host TLR2 agonist, and SodC. By restraining the release of most of the material that activates host cells through TLR2, VirR reduces the immunostimulant potential of M.tuberculosis and increases its virulence. May contribute to cell envelope integrity. Its function is as follows. When overexpressed in M.smegmatis, it modulates the production of IL-10, IL-12 p40 and TNF-alpha by RAW264.7 macrophages and it decreases the killing of M.smegmatis. The sequence is that of Vesiculogenesis and immune response regulator from Mycobacterium tuberculosis (strain ATCC 25618 / H37Rv).